Reading from the N-terminus, the 2710-residue chain is Serine/threonine-protein kinase ATR (2710 aa).

The FAT domain occupies 1647-2257 (TLAKASFRCQ…LWMMAAVSKS (611 aa)). In terms of domain architecture, PI3K/PI4K catalytic spans 2368 to 2680 (IADDAEILNS…GVNAAPSLPL (313 aa)). The tract at residues 2374 to 2380 (ILNSLQK) is G-loop. Residues 2545-2553 (GLGDRHGEN) form a catalytic loop region. The tract at residues 2565 to 2589 (HVDFSCLFDKGLLLEKPEVVPFRFT) is activation loop. Residues 2678 to 2710 (LPLSVEGQARRLIAEAVSHSNLGKMYVWWMAWF) form the FATC domain.

The protein belongs to the PI3/PI4-kinase family. ATM subfamily.

It localises to the nucleus. It carries out the reaction L-seryl-[protein] + ATP = O-phospho-L-seryl-[protein] + ADP + H(+). It catalyses the reaction L-threonyl-[protein] + ATP = O-phospho-L-threonyl-[protein] + ADP + H(+). Functionally, probable serine/threonine kinase. Seems to play a central role in cell-cycle regulation by transmitting DNA damage signals to downstream effectors of cell-cycle progression. May recognize the substrate consensus sequence [ST]-Q and phosphorylate histone variant H2AX to form H2AXS139ph at sites of DNA damage, thereby regulating DNA damage response mechanism. This Oryza sativa subsp. indica (Rice) protein is Serine/threonine-protein kinase ATR.